We begin with the raw amino-acid sequence, 378 residues long: Circumsporozoite protein (378 aa).

The first 22 residues, 1-22 (MKNFNLLAVSSILLVDLFPTHC), serve as a signal peptide directing secretion. The interval 50 to 291 (AQVRQSASRG…GQGQNNEGAN (242 aa)) is disordered. Basic and acidic residues-rich tracts occupy residues 66–92 (PKNEEGADKQKKDEKKVEPKKPRENKL) and 101–126 (ARAEDGARAEDGARAEDGARAEDGAR). The tract at residues 80-88 (KKVEPKKPR) is required for the binding to heparan sulfate proteoglycans (HSPGs) on the surface of host hepatocytes. A region I; contains the proteolytic cleavage site region spans residues 91 to 95 (KLKQP). 24 tandem repeats follow at residues 99-104 (DGARAE), 105-110 (DGARAE), 111-116 (DGARAE), 117-122 (DGARAE), 123-128 (DGARAA), 129-134 (DGARAA), 135-140 (DGARAA), 141-146 (DGARAE), 147-152 (DGARAE), 153-158 (DGARAE), 159-164 (DGARAA), 165-170 (DGARAA), 171-176 (DGARAA), 177-182 (DGARAA), 183-188 (DGARAA), 189-194 (DGARAA), 195-200 (DGARAA), 201-206 (DGARAE), 212-222 (GNREGGQAGAG), 223-233 (GNQAGGQAGAG), 234-244 (GNQAGGQAGAG), 245-255 (GNQAGGQAGAG), 256-266 (GNQAGGQAGAG), and 267-277 (GNRAGGQAGAG). The 18 X 6 AA tandem repeats of D-G-A-R-A-[EA] stretch occupies residues 99–206 (DGARAEDGAR…ARAADGARAE (108 aa)). Residues 127–140 (AADGARAADGARAA) show a composition bias toward low complexity. The span at 141–162 (DGARAEDGARAEDGARAEDGAR) shows a compositional bias: basic and acidic residues. The segment covering 163–200 (AADGARAADGARAADGARAADGARAADGARAADGARAA) has biased composition (low complexity). The 6 X 11 AA tandem repeats of G-N-[QR]-[AE]-G-G-Q-A-G-A-G stretch occupies residues 212-277 (GNREGGQAGA…NRAGGQAGAG (66 aa)). Positions 214-283 (REGGQAGAGG…AGAGDAGAGQ (70 aa)) are enriched in gly residues. The TSP type-1 domain occupies 304-356 (KIRSTIGVEWSPCTVTCGKGVRMRRKVSAANKKPEELDVNDLETEVCTMDKCA). Cystine bridges form between Cys-316/Cys-350 and Cys-320/Cys-355. Thr-319 is a glycosylation site (O-linked (Fuc) threonine). Cys-355 carries GPI-anchor amidated cysteine lipidation. Residues 356-378 (AGIFNVVSNSLGLVILLVLALFN) constitute a propeptide, removed in mature form.

This sequence belongs to the plasmodium circumsporozoite protein family. Post-translationally, during host cell invasion, proteolytically cleaved at the cell membrane in the region I by a papain-like cysteine protease of parasite origin. Cleavage is triggered by the sporozoite contact with highly sulfated heparan sulfate proteoglycans (HSPGs) present on the host hepatocyte cell surface. Cleavage exposes the TSP type-1 (TSR) domain and is required for productive invasion of host hepatocytes but not for adhesion to the host cell membrane. Cleavage is dispensable for sporozoite development in the oocyst, motility and for traversal of host and vector cells. In terms of processing, O-glycosylated; maybe by POFUT2.

Its subcellular location is the cell membrane. The protein resides in the cytoplasm. Functionally, essential sporozoite protein. In the mosquito vector, required for sporozoite development in the oocyst, migration through the vector hemolymph and entry into the vector salivary glands. In the vertebrate host, required for sporozoite migration through the host dermis and infection of host hepatocytes. Binds to highly sulfated heparan sulfate proteoglycans (HSPGs) on the surface of host hepatocytes. Its function is as follows. In the vertebrate host, binds to highly sulfated heparan sulfate proteoglycans (HSPGs) on the surface of host hepatocytes and is required for sporozoite invasion of the host hepatocytes. This chain is Circumsporozoite protein, found in Plasmodium cynomolgi (strain London).